We begin with the raw amino-acid sequence, 270 residues long: Tryptophan synthase alpha chain (270 aa).

Residues E60 and D71 each act as proton acceptor in the active site.

The protein belongs to the TrpA family. In terms of assembly, tetramer of two alpha and two beta chains.

The catalysed reaction is (1S,2R)-1-C-(indol-3-yl)glycerol 3-phosphate + L-serine = D-glyceraldehyde 3-phosphate + L-tryptophan + H2O. It participates in amino-acid biosynthesis; L-tryptophan biosynthesis; L-tryptophan from chorismate: step 5/5. The alpha subunit is responsible for the aldol cleavage of indoleglycerol phosphate to indole and glyceraldehyde 3-phosphate. This chain is Tryptophan synthase alpha chain, found in Deinococcus radiodurans (strain ATCC 13939 / DSM 20539 / JCM 16871 / CCUG 27074 / LMG 4051 / NBRC 15346 / NCIMB 9279 / VKM B-1422 / R1).